Here is a 275-residue protein sequence, read N- to C-terminus: NH(3)-dependent NAD(+) synthetase (275 aa).

46–53 is an ATP binding site; it reads GISGGQDS. Aspartate 52 contributes to the Mg(2+) binding site. Residue arginine 140 coordinates deamido-NAD(+). ATP is bound at residue threonine 160. Glutamate 165 contacts Mg(2+). The deamido-NAD(+) site is built by lysine 173 and aspartate 180. 2 residues coordinate ATP: lysine 189 and threonine 211. Deamido-NAD(+) is bound at residue 260-261; the sequence is HK.

The protein belongs to the NAD synthetase family. Homodimer.

The catalysed reaction is deamido-NAD(+) + NH4(+) + ATP = AMP + diphosphate + NAD(+) + H(+). It participates in cofactor biosynthesis; NAD(+) biosynthesis; NAD(+) from deamido-NAD(+) (ammonia route): step 1/1. Catalyzes the ATP-dependent amidation of deamido-NAD to form NAD. Uses ammonia as a nitrogen source. The protein is NH(3)-dependent NAD(+) synthetase of Salmonella dublin (strain CT_02021853).